We begin with the raw amino-acid sequence, 331 residues long: GTP 3',8-cyclase 2 (331 aa).

In terms of domain architecture, Radical SAM core spans 9–234 (PFGRRITYLR…PSLARSGGPS (226 aa)). Position 18 (arginine 18) interacts with GTP. Positions 25 and 29 each coordinate [4Fe-4S] cluster. Residue tyrosine 31 coordinates S-adenosyl-L-methionine. Cysteine 32 is a [4Fe-4S] cluster binding site. Residue arginine 67 coordinates GTP. An S-adenosyl-L-methionine-binding site is contributed by glycine 71. Threonine 98 lines the GTP pocket. Serine 122 provides a ligand contact to S-adenosyl-L-methionine. Lysine 159 lines the GTP pocket. Methionine 193 contacts S-adenosyl-L-methionine. Cysteine 257 and cysteine 260 together coordinate [4Fe-4S] cluster. 262 to 264 (RVR) is a binding site for GTP. Cysteine 274 is a binding site for [4Fe-4S] cluster.

The protein belongs to the radical SAM superfamily. MoaA family. As to quaternary structure, monomer and homodimer. [4Fe-4S] cluster is required as a cofactor.

It catalyses the reaction GTP + AH2 + S-adenosyl-L-methionine = (8S)-3',8-cyclo-7,8-dihydroguanosine 5'-triphosphate + 5'-deoxyadenosine + L-methionine + A + H(+). Its pathway is cofactor biosynthesis; molybdopterin biosynthesis. Catalyzes the cyclization of GTP to (8S)-3',8-cyclo-7,8-dihydroguanosine 5'-triphosphate. This Pseudomonas aeruginosa (strain ATCC 15692 / DSM 22644 / CIP 104116 / JCM 14847 / LMG 12228 / 1C / PRS 101 / PAO1) protein is GTP 3',8-cyclase 2 (moaA2).